Reading from the N-terminus, the 568-residue chain is Methyl-accepting chemotaxis protein CtpH (568 aa).

Residues 1 to 39 (MPASPGHRDVLGCLVAACVPVQPGNPSRRSMLQQSLRAQ) lie on the Cytoplasmic side of the membrane. The helical transmembrane segment at 40-60 (ILVLLGGSLAALLLIALACFG) threads the bilayer. At 61-216 (SLTGDVRAYR…ISAEARRTML (156 aa)) the chain is on the periplasmic side. A helical membrane pass occupies residues 217 to 237 (LGSLVLIGASLAVALLSLWLV). The Cytoplasmic segment spans residues 238–568 (NRNLVRPVQR…LGDALQRLRA (331 aa)). An HAMP domain is found at 239–291 (RNLVRPVQRLIEHIAQLSHGDFGERIEIRRKDELGKLALAANTLRDFLVDIFD). Residues 296–532 (STRDLDSASG…EISRNLTEIA (237 aa)) form the Methyl-accepting transducer domain.

The protein belongs to the methyl-accepting chemotaxis (MCP) protein family.

Its subcellular location is the cell inner membrane. Chemotactic-signal transducers respond to changes in the concentration of attractants and repellents in the environment, transduce a signal from the outside to the inside of the cell, and facilitate sensory adaptation through the variation of the level of methylation. Chemoreceptor for inorganic phosphate, which is required for taxis at high concentrations of phosphate. Recognizes inorganic phosphate directly. Can also bind to other components that have a pyrophosphate group, including ATP and ADP. This is Methyl-accepting chemotaxis protein CtpH from Pseudomonas aeruginosa (strain ATCC 15692 / DSM 22644 / CIP 104116 / JCM 14847 / LMG 12228 / 1C / PRS 101 / PAO1).